The primary structure comprises 497 residues: Probable cytosol aminopeptidase (497 aa).

K263 and D268 together coordinate Mn(2+). Residue K275 is part of the active site. Positions 286, 345, and 347 each coordinate Mn(2+). The active site involves R349.

Belongs to the peptidase M17 family. The cofactor is Mn(2+).

The protein localises to the cytoplasm. The enzyme catalyses Release of an N-terminal amino acid, Xaa-|-Yaa-, in which Xaa is preferably Leu, but may be other amino acids including Pro although not Arg or Lys, and Yaa may be Pro. Amino acid amides and methyl esters are also readily hydrolyzed, but rates on arylamides are exceedingly low.. It carries out the reaction Release of an N-terminal amino acid, preferentially leucine, but not glutamic or aspartic acids.. Its function is as follows. Presumably involved in the processing and regular turnover of intracellular proteins. Catalyzes the removal of unsubstituted N-terminal amino acids from various peptides. The protein is Probable cytosol aminopeptidase of Sinorhizobium medicae (strain WSM419) (Ensifer medicae).